The primary structure comprises 357 residues: UPF0283 membrane protein HSM_0945 (357 aa).

Helical transmembrane passes span Leu-67 to Val-87, Ile-96 to Ile-116, and Ala-213 to Ile-233.

This sequence belongs to the UPF0283 family.

It is found in the cell inner membrane. This Histophilus somni (strain 2336) (Haemophilus somnus) protein is UPF0283 membrane protein HSM_0945.